Consider the following 306-residue polypeptide: Glutaminase (306 aa).

Substrate contacts are provided by Ser-64, Asn-115, Glu-159, Asn-166, Tyr-190, Tyr-242, and Val-260.

Belongs to the glutaminase family. As to quaternary structure, homotetramer.

The enzyme catalyses L-glutamine + H2O = L-glutamate + NH4(+). This Vibrio parahaemolyticus serotype O3:K6 (strain RIMD 2210633) protein is Glutaminase.